Here is a 330-residue protein sequence, read N- to C-terminus: MALPEFSMRQLLEAGVHFGHQSHRWNPKMAEYIFGARNNIHIIDLAQTVPLLHNALKAVSDTVAKGGRVLFVGTKRQAQDVVADAAKRSAQYFVNSRWLGGTLTNWKTISASIKRLRHLDEMLNSGDAGSYTKKERLTLQRERDKLDRSLGGIKDMGGLPDLLFVIDTNKEDIAIQEAQRLGIPVAAIVDTNCDPKGISYLVPGNDDAGRAITLYCDLVARAVIDGLSRAQGDSGYDAGAMAQPLREELPVVAEARFQGLAGPRGVADDLKKLTGVSGAIEKKFNDLGIFHFWQLAELDHDTAHKISEEVGLPSRADAWVAQAKTLTEAE.

This sequence belongs to the universal ribosomal protein uS2 family.

This is Small ribosomal subunit protein uS2 from Rhodopseudomonas palustris (strain BisA53).